We begin with the raw amino-acid sequence, 189 residues long: Movement protein (189 aa).

The protein belongs to the tombusvirus/aureusvirus movement protein p22 family. In terms of assembly, interacts with host protein HFI22. In terms of processing, phosphorylated.

The protein localises to the host membrane. Functionally, transports viral genome to neighboring plant cells directly through plasmosdesmata, without any budding. The movement protein allows efficient cell to cell propagation, by bypassing the host cell wall barrier. The protein is Movement protein of Capsicum annuum (Capsicum pepper).